Here is a 740-residue protein sequence, read N- to C-terminus: Elongation factor 2 (740 aa).

The tr-type G domain occupies 18–263 (EQVRNIGIIA…MVVRWVPNPR (246 aa)). GTP-binding positions include 27-34 (AHVDHGKT), 93-97 (DTPGH), and 147-150 (NKVD). Position 606 is a diphthamide (histidine 606).

The protein belongs to the TRAFAC class translation factor GTPase superfamily. Classic translation factor GTPase family. EF-G/EF-2 subfamily.

The protein localises to the cytoplasm. Catalyzes the GTP-dependent ribosomal translocation step during translation elongation. During this step, the ribosome changes from the pre-translocational (PRE) to the post-translocational (POST) state as the newly formed A-site-bound peptidyl-tRNA and P-site-bound deacylated tRNA move to the P and E sites, respectively. Catalyzes the coordinated movement of the two tRNA molecules, the mRNA and conformational changes in the ribosome. The protein is Elongation factor 2 of Ignicoccus hospitalis (strain KIN4/I / DSM 18386 / JCM 14125).